Consider the following 92-residue polypeptide: Nodulation protein F (92 aa).

Residues 4–88 (QLTVEIIAAI…DVVEAVRGLI (85 aa)) form the Carrier domain. Serine 45 is modified (O-(pantetheine 4'-phosphoryl)serine).

Post-translationally, 4'-phosphopantetheine is transferred from CoA to a specific serine of apo-NodF.

Proposed to synthesize nod factor fatty acyl chain. Involved in trans-2,trans-4,trans-6,cis-11-octadecatetraenoic acid biosynthesis. This Rhizobium leguminosarum bv. trifolii protein is Nodulation protein F (nodF).